We begin with the raw amino-acid sequence, 154 residues long: Endoribonuclease YbeY (154 aa).

Residues His113, His117, and His123 each contribute to the Zn(2+) site.

It belongs to the endoribonuclease YbeY family. Zn(2+) is required as a cofactor.

It is found in the cytoplasm. In terms of biological role, single strand-specific metallo-endoribonuclease involved in late-stage 70S ribosome quality control and in maturation of the 3' terminus of the 16S rRNA. The protein is Endoribonuclease YbeY of Verminephrobacter eiseniae (strain EF01-2).